A 114-amino-acid polypeptide reads, in one-letter code: MWKALSQLLKKQKNQSPSDEDYIQIPELEVKVLGMLHSINIDLVNVIAQAEKSKEFIGQIEGIWHSIANQFYSLAQGFENEDINKLSADLDHAAATWEAVANKAKEFVTNSYQG.

This is an uncharacterized protein from Bacillus subtilis (strain 168).